Here is a 455-residue protein sequence, read N- to C-terminus: Dihydrolipoyllysine-residue succinyltransferase component of 2-oxoglutarate dehydrogenase complex, mitochondrial (455 aa).

Residues 1–68 (MLSRSRCASR…RFFRTTAVCK (68 aa)) constitute a mitochondrion transit peptide. One can recognise a Lipoyl-binding domain in the interval 71-145 (VITVKTPAFA…EGGTPLFTLR (75 aa)). S82 is subject to Phosphoserine. K111 is modified (N6-lipoyllysine). An N6-acetyllysine modification is found at K155. A compositionally biased stretch (low complexity) spans 155–173 (KPAAAPAAAAPKAEPTVSA). The segment at 155-220 (KPAAAPAAAA…PRAEAGAGVG (66 aa)) is disordered. A compositionally biased stretch (pro residues) spans 174–193 (VPPPPAAPIPTQMPPVPSPS). An N6-acetyllysine mark is found at K269, K274, K275, K279, and K309. Residues H426 and D430 contribute to the active site.

Belongs to the 2-oxoacid dehydrogenase family. As to quaternary structure, the 2-oxoglutarate dehydrogenase complex is composed of OGDH (2-oxoglutarate dehydrogenase; E1), DLST (dihydrolipoamide succinyltransferase; E2), DLD (dihydrolipoamide dehydrogenase; E3) and the assembly factor KGD4. It contains multiple copies of the three enzymatic components (E1, E2 and E3). In the nucleus, the 2-oxoglutarate dehydrogenase complex associates with KAT2A. Interacts with ABHD11; this interaction maintains the functional lipoylation of the 2-oxoglutarate dehydrogenase complex. The cofactor is (R)-lipoate.

It is found in the mitochondrion matrix. Its subcellular location is the nucleus. The catalysed reaction is N(6)-[(R)-dihydrolipoyl]-L-lysyl-[protein] + succinyl-CoA = N(6)-[(R)-S(8)-succinyldihydrolipoyl]-L-lysyl-[protein] + CoA. The protein operates within amino-acid degradation; L-lysine degradation via saccharopine pathway; glutaryl-CoA from L-lysine: step 6/6. Its pathway is carbohydrate metabolism; tricarboxylic acid cycle. In terms of biological role, dihydrolipoamide succinyltransferase (E2) component of the 2-oxoglutarate dehydrogenase complex. The 2-oxoglutarate dehydrogenase complex catalyzes the overall conversion of 2-oxoglutarate to succinyl-CoA and CO(2). The 2-oxoglutarate dehydrogenase complex is mainly active in the mitochondrion. A fraction of the 2-oxoglutarate dehydrogenase complex also localizes in the nucleus and is required for lysine succinylation of histones: associates with KAT2A on chromatin and provides succinyl-CoA to histone succinyltransferase KAT2A. In Bos taurus (Bovine), this protein is Dihydrolipoyllysine-residue succinyltransferase component of 2-oxoglutarate dehydrogenase complex, mitochondrial.